The chain runs to 524 residues: Putative ribose/galactose/methyl galactoside import ATP-binding protein 1 (524 aa).

ABC transporter domains follow at residues 29–270 (LEMR…VGRT) and 280–524 (VPIG…TGGH). 61–68 (GENGAGKS) provides a ligand contact to ATP.

The protein belongs to the ABC transporter superfamily. Carbohydrate importer 2 (CUT2) (TC 3.A.1.2) family.

It is found in the cell inner membrane. It catalyses the reaction D-ribose(out) + ATP + H2O = D-ribose(in) + ADP + phosphate + H(+). It carries out the reaction D-galactose(out) + ATP + H2O = D-galactose(in) + ADP + phosphate + H(+). In terms of biological role, part of an ABC transporter complex involved in carbohydrate import. Could be involved in ribose, galactose and/or methyl galactoside import. Responsible for energy coupling to the transport system. The sequence is that of Putative ribose/galactose/methyl galactoside import ATP-binding protein 1 from Rhizobium etli (strain ATCC 51251 / DSM 11541 / JCM 21823 / NBRC 15573 / CFN 42).